The primary structure comprises 383 residues: Probable transcriptional repressor C1348.12 (383 aa).

Positions C34–C60 form a DNA-binding region, zn(2)-C6 fungal-type.

The protein localises to the nucleus. Functionally, probable transcriptional repressor of multidrug resistance genes. This Schizosaccharomyces pombe (strain 972 / ATCC 24843) (Fission yeast) protein is Probable transcriptional repressor C1348.12.